The sequence spans 139 residues: Nucleoside diphosphate kinase (139 aa).

Residues lysine 9, phenylalanine 57, arginine 85, threonine 91, arginine 102, and asparagine 112 each contribute to the ATP site. Histidine 115 functions as the Pros-phosphohistidine intermediate in the catalytic mechanism.

This sequence belongs to the NDK family. Homotetramer. The cofactor is Mg(2+).

It is found in the cytoplasm. The catalysed reaction is a 2'-deoxyribonucleoside 5'-diphosphate + ATP = a 2'-deoxyribonucleoside 5'-triphosphate + ADP. It carries out the reaction a ribonucleoside 5'-diphosphate + ATP = a ribonucleoside 5'-triphosphate + ADP. Major role in the synthesis of nucleoside triphosphates other than ATP. The ATP gamma phosphate is transferred to the NDP beta phosphate via a ping-pong mechanism, using a phosphorylated active-site intermediate. This chain is Nucleoside diphosphate kinase, found in Exiguobacterium sp. (strain ATCC BAA-1283 / AT1b).